A 695-amino-acid polypeptide reads, in one-letter code: Potassium voltage-gated channel subfamily KQT member 4 (695 aa).

Residues 1–21 (MAEAPPRRLGLGPPPGDAPRA) are disordered. Residues 1 to 96 (MAEAPPRRLG…VYNVLERPRG (96 aa)) lie on the Cytoplasmic side of the membrane. R93 provides a ligand contact to a 1,2-diacyl-sn-glycero-3-phospho-(1D-myo-inositol-4,5-bisphosphate). The helical transmembrane segment at 97 to 118 (WAFVYHVFIFLLVFSCLVLSVL) threads the bilayer. The Extracellular segment spans residues 119 to 129 (STIQEHQELAN). A helical transmembrane segment spans residues 130–152 (ECLLILEFVMIVVFGLEYIIRVW). The Cytoplasmic portion of the chain corresponds to 153–168 (SAGCCCRYRGWQGRFR). A helical membrane pass occupies residues 169 to 191 (FARKPFCVIDFIVFVASVAVIAA). K172 lines the a 1,2-diacyl-sn-glycero-3-phospho-(1D-myo-inositol-4,5-bisphosphate) pocket. Topologically, residues 192 to 202 (GTQGNIFATSA) are extracellular. The helical; Voltage-sensor transmembrane segment at 203-223 (LRSMRFLQILRMVRMDRRGGT) threads the bilayer. R219, R220, K225, and S235 together coordinate a 1,2-diacyl-sn-glycero-3-phospho-(1D-myo-inositol-4,5-bisphosphate). The Cytoplasmic portion of the chain corresponds to 224 to 235 (WKLLGSVVYAHS). The helical transmembrane segment at 236-258 (KELITAWYIGFLVLIFASFLVYL) threads the bilayer. Topologically, residues 259–270 (AEKDANSDFSSY) are extracellular. The pore-forming intramembrane region spans 271-292 (ADSLWWGTITLTTIGYGDKTPH). A topological domain (extracellular) is located at residue T293. Residues 294-322 (WLGRVLAAGFALLGISFFALPAGILGSGF) traverse the membrane as a helical segment. Topologically, residues 323–695 (ALKVQEQHRQ…ISRSVSTNMD (373 aa)) are cytoplasmic. The a 1,2-diacyl-sn-glycero-3-phospho-(1D-myo-inositol-4,5-bisphosphate) site is built by H330 and K333. The tract at residues 342 to 351 (AANLIQAAWR) is interaction with CALM. Positions 441-483 (RMSSSQKRTGPSKQHLAPPPIPTSPSSEQVGEASSPSKVQKSW) are disordered. Polar residues-rich tracts occupy residues 442–452 (MSSSQKRTGPS) and 464–483 (SPSS…QKSW). Positions 535 to 549 (RSVRILKFLVAKRKF) are interaction with CALM. Positions 546 to 650 (KRKFKETLRP…SRCLRSGTSA (105 aa)) are C-terminal assembly domain (tetramerization). The interval 588 to 608 (GRGPGDRKTREKGDKGPSDTE) is disordered. Positions 591–605 (PGDRKTREKGDKGPS) are enriched in basic and acidic residues.

The protein belongs to the potassium channel family. KQT (TC 1.A.1.15) subfamily. Kv7.4/KCNQ4 sub-subfamily. In terms of assembly, homotetramer. Interacts (via C-terminus) with calmodulin; forms a heterooctameric structure (with 4:4 KCNQ1:CALM stoichiometry); the interaction is calcium-independent, constitutive, participates in the proper assembly of a functional channel. The interaction with calcium-free CALM controls channel trafficking whereas interaction with calcium-bound CALM regulates channel gating. May form a functional heteromultimeric channel with KCNQ3. Interacts with HSP90AB1; promotes cell surface expression of KCNQ4. As to expression, expressed in both the inner (IHCs) and the outer hair cells (OHCs) of the cochlea. Reciprocal longitudinal gradients of expression is present in IHCs and OHCs. The strongest expression in IHCs is in the base of the cochlea and in the apex for OHCs. A basal to apical gradient of expression is also present in both type I and type II spiral ganglion cells.

The protein resides in the basal cell membrane. The catalysed reaction is K(+)(in) = K(+)(out). Its activity is regulated as follows. Two molecules of phosphatidylinositol-4,5-bisphosphate (PIP2-I and PIP2-II) are essential to activate KCNQ4 channel by inducing the coupling of the voltage-sensing domain (VSD) and the pore-forming domain (PD). Upon channel activation, PIP2-I and PIP2-II disrupt the VSD-calmodulin/CALM interaction, causing the release of CALM from the VSD which triggers the opening of the gate. Calcium suppresses KCNQ4 channel current through calcium-bound CALM C-terminus. Therefore CALM acts as calcium sensor that controls channel activity. Functionally, pore-forming subunit of the voltage-gated potassium (Kv) channel involved in the regulation of sensory cells excitability in the cochlea. KCNQ4/Kv7.4 channel is composed of 4 pore-forming subunits assembled as tetramers. Promotes the outflow of potassium ions in the repolarization phase of action potential which plays a role in regulating membrane potential of excitable cells. The channel conducts a slowly activating and deactivating current. Current often shows some inward rectification at positive potentials. Channel may be selectively permeable in vitro to other cations besides potassium, in decreasing order of affinity K(+) = Rb(+) &gt; Cs(+) &gt; Na(+). Important for normal physiological function of inner ear such as sensory perception of sound. In Rattus norvegicus (Rat), this protein is Potassium voltage-gated channel subfamily KQT member 4.